The sequence spans 444 residues: Protein CLP1 homolog (444 aa).

Residues glutamate 33, lysine 72, and 140–145 (DSGKST) contribute to the ATP site.

This sequence belongs to the Clp1 family. Clp1 subfamily. In terms of assembly, interacts with PCFS4 and SYM5. Forms a complex with cleavage and polyadenylation specificity factor (CPSF) subunits CPSF30, CPSF100, PCFS1, PCFS4, PCFS5, CPSF160 and FY.

It is found in the nucleus. Functionally, required for endonucleolytic cleavage during polyadenylation-dependent pre-mRNA 3'-end formation. Functions in gametophyte, embryo and postembryotic development. This Arabidopsis thaliana (Mouse-ear cress) protein is Protein CLP1 homolog (CLPS3).